The sequence spans 396 residues: NADH-quinone oxidoreductase subunit D (396 aa).

This sequence belongs to the complex I 49 kDa subunit family. In terms of assembly, NDH-1 is composed of 14 different subunits. Subunits NuoB, C, D, E, F, and G constitute the peripheral sector of the complex.

The protein resides in the cell inner membrane. It carries out the reaction a quinone + NADH + 5 H(+)(in) = a quinol + NAD(+) + 4 H(+)(out). Its function is as follows. NDH-1 shuttles electrons from NADH, via FMN and iron-sulfur (Fe-S) centers, to quinones in the respiratory chain. The immediate electron acceptor for the enzyme in this species is believed to be ubiquinone. Couples the redox reaction to proton translocation (for every two electrons transferred, four hydrogen ions are translocated across the cytoplasmic membrane), and thus conserves the redox energy in a proton gradient. The sequence is that of NADH-quinone oxidoreductase subunit D from Brucella melitensis biotype 1 (strain ATCC 23456 / CCUG 17765 / NCTC 10094 / 16M).